The primary structure comprises 96 residues: Carboxysome shell protein CsoS1A (96 aa).

The BMC domain occupies 7-92; it reads ALGMIETRGL…PHKEVEPVLT (86 aa).

The protein belongs to the bacterial microcompartments protein family. CsoS1 subfamily. Homohexamer with a small central pore. Forms a CsoS2-CsoS1-RuBisCO complex.

It localises to the carboxysome. In terms of biological role, one of shell proteins of the carboxysome, a polyhedral inclusion where RuBisCO (ribulose bisphosphate carboxylase, ccbL-ccbS) is sequestered. Assembles into hexamers which make sheets that form the facets of the polyhedral carboxysome. The shell probably limits the diffusion of CO(2) into and out of the carboxysome. This is Carboxysome shell protein CsoS1A from Hydrogenovibrio crunogenus (strain DSM 25203 / XCL-2) (Thiomicrospira crunogena).